A 183-amino-acid chain; its full sequence is Capsid protein (183 aa).

The segment at 150–183 (RQRGRTIRRRTPSPRRRRSQSPRRRRSQSRESQC) is disordered. Basic residues predominate over residues 151 to 176 (QRGRTIRRRTPSPRRRRSQSPRRRRS). Residues 158–175 (RRTPSPRRRRSQSPRRRR) carry the Bipartite nuclear localization signal motif. 2 positions are modified to phosphoserine; by host: Ser162 and Ser170. Repeat copies occupy residues 162–169 (SPRRRRSQ) and 170–177 (SPRRRRSQ). Positions 162–177 (SPRRRRSQSPRRRRSQ) are 2 X 8 AA repeats of S-P-R-R-R-[PR]-S-Q. The segment at 177–183 (QSRESQC) is RNA binding.

This sequence belongs to the orthohepadnavirus core antigen family. As to quaternary structure, homodimerizes, then multimerizes. Interacts with cytosol exposed regions of viral L glycoprotein present in the reticulum-to-Golgi compartment. Interacts with human FLNB. Phosphorylated form interacts with host importin alpha; this interaction depends on the exposure of the NLS, which itself depends upon genome maturation and/or phosphorylation of the capsid protein. Interacts with host NUP153. In terms of processing, phosphorylated by host SRPK1, SRPK2, and maybe protein kinase C or GAPDH. Phosphorylation is critical for pregenomic RNA packaging. Protein kinase C phosphorylation is stimulated by HBx protein and may play a role in transport of the viral genome to the nucleus at the late step during the viral replication cycle.

It localises to the virion. The protein resides in the host cytoplasm. In terms of biological role, self assembles to form an icosahedral capsid. Most capsids appear to be large particles with an icosahedral symmetry of T=4 and consist of 240 copies of capsid protein, though a fraction forms smaller T=3 particles consisting of 180 capsid proteins. Entering capsids are transported along microtubules to the nucleus. Phosphorylation of the capsid is thought to induce exposure of nuclear localization signal in the C-terminal portion of the capsid protein that allows binding to the nuclear pore complex via the importin (karyopherin-) alpha and beta. Capsids are imported in intact form through the nuclear pore into the nuclear basket, where it probably binds NUP153. Only capsids that contain the mature viral genome can release the viral DNA and capsid protein into the nucleoplasm. Immature capsids get stuck in the basket. Capsids encapsulate the pre-genomic RNA and the P protein. Pre-genomic RNA is reverse-transcribed into DNA while the capsid is still in the cytoplasm. The capsid can then either be directed to the nucleus, providing more genomes for transcription, or bud through the endoplasmic reticulum to provide new virions. This is Capsid protein from Homo sapiens (Human).